The chain runs to 473 residues: ATP synthase subunit beta (473 aa).

158 to 165 (GGAGVGKT) is a binding site for ATP.

Belongs to the ATPase alpha/beta chains family. F-type ATPases have 2 components, CF(1) - the catalytic core - and CF(0) - the membrane proton channel. CF(1) has five subunits: alpha(3), beta(3), gamma(1), delta(1), epsilon(1). CF(0) has three main subunits: a(1), b(2) and c(9-12). The alpha and beta chains form an alternating ring which encloses part of the gamma chain. CF(1) is attached to CF(0) by a central stalk formed by the gamma and epsilon chains, while a peripheral stalk is formed by the delta and b chains. The F(1)F(0) complex interacts with SpoIIIJ and YqjG; YqgA is found in the same complex.

The protein resides in the cell membrane. It localises to the membrane raft. The catalysed reaction is ATP + H2O + 4 H(+)(in) = ADP + phosphate + 5 H(+)(out). In terms of biological role, produces ATP from ADP in the presence of a proton gradient across the membrane. The catalytic sites are hosted primarily by the beta subunits. The chain is ATP synthase subunit beta from Bacillus subtilis (strain 168).